Reading from the N-terminus, the 159-residue chain is Transcriptional repressor NrdR (159 aa).

Residues 1–11 are compositionally biased toward polar residues; it reads MQCPTCQNTDS. The interval 1–21 is disordered; that stretch reads MQCPTCQNTDSRVLESRSADS. A zinc finger spans residues 3 to 34; sequence CPTCQNTDSRVLESRSADSGKSVRRRRECLNC. An ATP-cone domain is found at 49–139; sequence VSVLKKDGSR…VYRKFNGVKD (91 aa).

It belongs to the NrdR family. It depends on Zn(2+) as a cofactor.

Functionally, negatively regulates transcription of bacterial ribonucleotide reductase nrd genes and operons by binding to NrdR-boxes. This Prochlorococcus marinus (strain MIT 9301) protein is Transcriptional repressor NrdR.